The primary structure comprises 216 residues: Protein Syd (216 aa).

It belongs to the Syd family.

The protein localises to the cell inner membrane. Functionally, interacts with the SecY protein in vivo. May bind preferentially to an uncomplexed state of SecY, thus functioning either as a chelating agent for excess SecY in the cell or as a regulatory factor that negatively controls the translocase function. The chain is Protein Syd from Shewanella baltica (strain OS195).